The chain runs to 445 residues: Chromosomal replication initiator protein DnaA (445 aa).

The interval 1-73 is domain I, interacts with DnaA modulators; that stretch reads MSTHLTETWE…VNALKLLTSK (73 aa). Residues 73–106 are domain II; that stretch reads KKYNIDFIVTTEEKIEKNHNNEKSNIVVNDEMST. Positions 107-323 are domain III, AAA+ region; it reads MLNPKYTFDS…GALIRIVAFS (217 aa). Residues Gly151, Gly153, Lys154, and Thr155 each contribute to the ATP site. The segment at 324 to 445 is domain IV, binds dsDNA; it reads SLTNKEISVD…KELNKRINQK (122 aa).

The protein belongs to the DnaA family. In terms of assembly, oligomerizes as a right-handed, spiral filament on DNA at oriC.

Its subcellular location is the cytoplasm. Functionally, plays an essential role in the initiation and regulation of chromosomal replication. ATP-DnaA binds to the origin of replication (oriC) to initiate formation of the DNA replication initiation complex once per cell cycle. Binds the DnaA box (a 9 base pair repeat at the origin) and separates the double-stranded (ds)DNA. Forms a right-handed helical filament on oriC DNA; dsDNA binds to the exterior of the filament while single-stranded (ss)DNA is stabiized in the filament's interior. The ATP-DnaA-oriC complex binds and stabilizes one strand of the AT-rich DNA unwinding element (DUE), permitting loading of DNA polymerase. After initiation quickly degrades to an ADP-DnaA complex that is not apt for DNA replication. Binds acidic phospholipids. This chain is Chromosomal replication initiator protein DnaA, found in Clostridium botulinum (strain Okra / Type B1).